The following is a 100-amino-acid chain: Toxin Rv0299 (100 aa).

Its function is as follows. Toxic component of a type II toxin-antitoxin (TA) system. Upon expression in M.smegmatis inhibits colony formation. Its toxic effect is neutralized by coexpression with cognate antitoxin Rv0298/MT0312. This Mycobacterium tuberculosis (strain ATCC 25618 / H37Rv) protein is Toxin Rv0299.